Reading from the N-terminus, the 149-residue chain is 16.9 kDa class I heat shock protein 3 (149 aa).

The sHSP domain occupies 35–149; it reads DTAAFANARV…PEVKAIEISG (115 aa).

This sequence belongs to the small heat shock protein (HSP20) family. May form oligomeric structures.

The protein resides in the cytoplasm. The protein is 16.9 kDa class I heat shock protein 3 (HSP16.9C) of Oryza sativa subsp. japonica (Rice).